The following is a 306-amino-acid chain: Pantothenate kinase (306 aa).

90-97 (GSVAVGKS) contacts ATP.

This sequence belongs to the prokaryotic pantothenate kinase family.

It localises to the cytoplasm. It carries out the reaction (R)-pantothenate + ATP = (R)-4'-phosphopantothenate + ADP + H(+). It participates in cofactor biosynthesis; coenzyme A biosynthesis; CoA from (R)-pantothenate: step 1/5. The sequence is that of Pantothenate kinase from Ligilactobacillus salivarius (strain UCC118) (Lactobacillus salivarius).